The sequence spans 776 residues: Rho guanine nucleotide exchange factor 6 (776 aa).

Positions 1–111 (MNPEEQIVTW…TLLAVNKATE (111 aa)) constitute a Calponin-homology (CH) domain. The disordered stretch occupies residues 115-151 (SERPCGRSSSLSAANTSQTNPQGAVSSTVSGLQRQSK). The segment covering 121–151 (RSSSLSAANTSQTNPQGAVSSTVSGLQRQSK) has biased composition (polar residues). Ser126 carries the phosphoserine modification. Thr133 is modified (phosphothreonine). Phosphoserine is present on residues Ser144 and Ser150. An SH3 domain is found at 160–219 (SHQLIVKARFNFKQTNEDELSVCKGDIIYVTRVEEGGWWEGTLNGRTGWFPSNYVREIKS). Residue Ser225 is modified to Phosphoserine. A DH domain is found at 241–421 (YYTVVLQNIL…KTLMGQCQDL (181 aa)). Positions 443-548 (DIKNLGNVIF…WLEQLNRLIR (106 aa)) constitute a PH domain. Phosphoserine is present on Ser488. Residues 561 to 572 (SSSCSAHSSFSS) show a composition bias toward low complexity. A disordered region spans residues 561–581 (SSSCSAHSSFSSTGQPRGPLE). Phosphoserine occurs at positions 640 and 684.

In terms of assembly, interacts with PAK kinases through the SH3 domain. Interacts with GIT1. Component of cytoplasmic complexes, which also contain PXN, GIT1 and PAK1. Interacts with PARVB. Interacts with BIN2. Identified in a complex with BIN2 and GIT2. Interacts with PARVG; the guanine nucleotide exchange factor activity of ARHGEF6 is essential for PARVG-induced enhancement of cell spreading. As to expression, ubiquitous.

The protein localises to the cell projection. It is found in the lamellipodium. Acts as a RAC1 guanine nucleotide exchange factor (GEF). The chain is Rho guanine nucleotide exchange factor 6 (ARHGEF6) from Homo sapiens (Human).